We begin with the raw amino-acid sequence, 194 residues long: Peptidyl-tRNA hydrolase (194 aa).

Residue Tyr-16 participates in tRNA binding. Residue His-21 is the Proton acceptor of the active site. Residues Phe-67, Asn-69, and Asn-115 each coordinate tRNA.

The protein belongs to the PTH family. Monomer.

The protein resides in the cytoplasm. The enzyme catalyses an N-acyl-L-alpha-aminoacyl-tRNA + H2O = an N-acyl-L-amino acid + a tRNA + H(+). Its function is as follows. Hydrolyzes ribosome-free peptidyl-tRNAs (with 1 or more amino acids incorporated), which drop off the ribosome during protein synthesis, or as a result of ribosome stalling. Catalyzes the release of premature peptidyl moieties from peptidyl-tRNA molecules trapped in stalled 50S ribosomal subunits, and thus maintains levels of free tRNAs and 50S ribosomes. The protein is Peptidyl-tRNA hydrolase of Klebsiella pneumoniae (strain 342).